The following is a 250-amino-acid chain: MLLRTAAASSLSLFNPNAEPSRSVPVLANNASRLVVRAAKGSTNHRALTGVIFEPFEEVKKELDLVPTVPQASLARQKYVDESEAAVNEQINVEYNVSYVYHALFAYFDRDNVALRGLAKFFKESSEEEREHAEKLMEYQNRRGGKVKLQSIVMPLSEFDHADKGDALHAMELALSLEKLTNEKLLHLHSVATKNGDVQLADFVESEFLGEQVESIKRISEYVAQLRRVGKGHGVWHFDQMLLHEGGHLA.

The N-terminal 43 residues, 1-43, are a transit peptide targeting the chloroplast; the sequence is MLLRTAAASSLSLFNPNAEPSRSVPVLANNASRLVVRAAKGST. An extension peptide (EP) region spans residues 44–76; it reads NHRALTGVIFEPFEEVKKELDLVPTVPQASLAR. In terms of domain architecture, Ferritin-like diiron spans 77–230; the sequence is QKYVDESEAA…EYVAQLRRVG (154 aa). Residues Glu94, Glu129, His132, Glu178, and Gln212 each contribute to the Fe cation site.

The protein belongs to the ferritin family. In terms of assembly, oligomer of 24 subunits. There are two types of subunits: L (light) chain and H (heavy) chain. The major chain can be light or heavy, depending on the species and tissue type. The functional molecule forms a roughly spherical shell with a diameter of 12 nm and contains a central cavity into which the insoluble mineral iron core is deposited.

It localises to the plastid. Its subcellular location is the chloroplast. It carries out the reaction 4 Fe(2+) + O2 + 4 H(+) = 4 Fe(3+) + 2 H2O. Its function is as follows. Stores iron in a soluble, non-toxic, readily available form. Important for iron homeostasis. Has ferroxidase activity. Iron is taken up in the ferrous form and deposited as ferric hydroxides after oxidation. In Vigna unguiculata (Cowpea), this protein is Ferritin-2, chloroplastic (PFE2).